Consider the following 556-residue polypeptide: Serine beta-lactamase-like protein LACTB, mitochondrial (556 aa).

A mitochondrion-targeting transit peptide spans 1-117; sequence MYRLLSAVMA…RAIDSSRDLL (117 aa). The active-site Acyl-ester intermediate is Ser-166. The segment covering 249 to 282 has biased composition (basic and acidic residues); sequence ESDQEKELKEKGGKSNEKNDFAKAKVEQDNETKG. The tract at residues 249–290 is disordered; the sequence is ESDQEKELKEKGGKSNEKNDFAKAKVEQDNETKGRNSKPCKK. Lys-290 and Lys-291 each carry N6-succinyllysine. Residues Lys-304 and Lys-349 each carry the N6-acetyllysine modification.

It belongs to the peptidase S12 family.

Its subcellular location is the mitochondrion. Functionally, mitochondrial serine protease that acts as a regulator of mitochondrial lipid metabolism. Acts by decreasing protein levels of PISD, a mitochondrial enzyme that converts phosphatidylserine (PtdSer) to phosphatidylethanolamine (PtdEtn), thereby affecting mitochondrial lipid metabolism. It is unclear whether it acts directly by mediating proteolysis of PISD or by mediating proteolysis of another lipid metabolism protein. This Bos taurus (Bovine) protein is Serine beta-lactamase-like protein LACTB, mitochondrial.